The sequence spans 1579 residues: DNA-directed RNA polymerase subunit beta' (1579 aa).

Cys-65, Cys-67, Cys-80, and Cys-83 together coordinate Zn(2+). Mg(2+)-binding residues include Asp-601, Asp-603, and Asp-605. Zn(2+)-binding residues include Cys-938, Cys-1012, Cys-1019, and Cys-1022.

This sequence belongs to the RNA polymerase beta' chain family. As to quaternary structure, the RNAP catalytic core consists of 2 alpha, 1 beta, 1 beta' and 1 omega subunit. When a sigma factor is associated with the core the holoenzyme is formed, which can initiate transcription. The cofactor is Mg(2+). It depends on Zn(2+) as a cofactor.

The catalysed reaction is RNA(n) + a ribonucleoside 5'-triphosphate = RNA(n+1) + diphosphate. Functionally, DNA-dependent RNA polymerase catalyzes the transcription of DNA into RNA using the four ribonucleoside triphosphates as substrates. In Sulfurihydrogenibium sp. (strain YO3AOP1), this protein is DNA-directed RNA polymerase subunit beta'.